The sequence spans 479 residues: ATP-dependent protease ATPase subunit HslU (479 aa).

ATP contacts are provided by residues Ile32, Gly74 to Glu79, Asp290, Glu355, and Arg427.

The protein belongs to the ClpX chaperone family. HslU subfamily. A double ring-shaped homohexamer of HslV is capped on each side by a ring-shaped HslU homohexamer. The assembly of the HslU/HslV complex is dependent on binding of ATP.

It localises to the cytoplasm. In terms of biological role, ATPase subunit of a proteasome-like degradation complex; this subunit has chaperone activity. The binding of ATP and its subsequent hydrolysis by HslU are essential for unfolding of protein substrates subsequently hydrolyzed by HslV. HslU recognizes the N-terminal part of its protein substrates and unfolds these before they are guided to HslV for hydrolysis. In Leptospira interrogans serogroup Icterohaemorrhagiae serovar copenhageni (strain Fiocruz L1-130), this protein is ATP-dependent protease ATPase subunit HslU.